Reading from the N-terminus, the 436-residue chain is Adenosylhomocysteinase (436 aa).

Substrate contacts are provided by Thr-62, Asp-136, and Glu-161. 162–164 (TTT) is an NAD(+) binding site. Substrate contacts are provided by Lys-191 and Asp-195. NAD(+)-binding positions include Asn-196, 225-230 (GFGDVG), Glu-248, Asn-283, 304-306 (IGH), and Asn-352.

The protein belongs to the adenosylhomocysteinase family. It depends on NAD(+) as a cofactor.

It localises to the cytoplasm. The enzyme catalyses S-adenosyl-L-homocysteine + H2O = L-homocysteine + adenosine. It participates in amino-acid biosynthesis; L-homocysteine biosynthesis; L-homocysteine from S-adenosyl-L-homocysteine: step 1/1. Its function is as follows. May play a key role in the regulation of the intracellular concentration of adenosylhomocysteine. This Leptospira borgpetersenii serovar Hardjo-bovis (strain JB197) protein is Adenosylhomocysteinase.